A 479-amino-acid chain; its full sequence is Aspartyl/glutamyl-tRNA(Asn/Gln) amidotransferase subunit B (479 aa).

This sequence belongs to the GatB/GatE family. GatB subfamily. Heterotrimer of A, B and C subunits.

It catalyses the reaction L-glutamyl-tRNA(Gln) + L-glutamine + ATP + H2O = L-glutaminyl-tRNA(Gln) + L-glutamate + ADP + phosphate + H(+). The enzyme catalyses L-aspartyl-tRNA(Asn) + L-glutamine + ATP + H2O = L-asparaginyl-tRNA(Asn) + L-glutamate + ADP + phosphate + 2 H(+). In terms of biological role, allows the formation of correctly charged Asn-tRNA(Asn) or Gln-tRNA(Gln) through the transamidation of misacylated Asp-tRNA(Asn) or Glu-tRNA(Gln) in organisms which lack either or both of asparaginyl-tRNA or glutaminyl-tRNA synthetases. The reaction takes place in the presence of glutamine and ATP through an activated phospho-Asp-tRNA(Asn) or phospho-Glu-tRNA(Gln). This is Aspartyl/glutamyl-tRNA(Asn/Gln) amidotransferase subunit B from Geobacter sulfurreducens (strain ATCC 51573 / DSM 12127 / PCA).